The sequence spans 462 residues: GTPase Der (462 aa).

2 consecutive EngA-type G domains span residues 3–166 (PVIA…TTET) and 175–348 (IKIA…HSAI). GTP contacts are provided by residues 9-16 (GRPNVGKS), 56-60 (DTGGI), 118-121 (NKTD), 181-188 (GRPNVGKS), 228-232 (DTAGV), and 293-296 (NKWD). One can recognise a KH-like domain in the interval 349 to 433 (QSFSTPKLTR…PLKIEFKGGQ (85 aa)).

Belongs to the TRAFAC class TrmE-Era-EngA-EngB-Septin-like GTPase superfamily. EngA (Der) GTPase family. Associates with the 50S ribosomal subunit.

In terms of biological role, GTPase that plays an essential role in the late steps of ribosome biogenesis. The chain is GTPase Der from Legionella pneumophila (strain Paris).